The primary structure comprises 604 residues: MAGDVEGFCSSIHDTSVSAGFRALYEEGLLLDVTLVIEDHQFQAHKALLATQSDYFRIMFTADMRERDQDKIHLKGLTATGFSHVLQFMYYGTIELSMNTVHEILQAAMYVQLIEVVKFCCSFLLAKICLENCAEIMRLLDDFGVNIEGVREKLDAFLLDNFVPLMSRPDFLSYLSFEKLMSYLDNDHLSRFPEIELYEAVQSWLRHDRRRWRHTDTIIQNIRFCLMTPSSVFEKVKTSEFYRYSRQLRYEVDQALNYFQNVHQQPLLDMKSSRIRSAKPQTTVFRGMIGHSMVNSKILLLKKPRVWWELEGPQVPLRPDCLAIVNNFVFLLGGEELGPDGEFHASSKVFRYDPRQNSWLRMADMSVPRSEFAVGVIGKFIYAVAGRTRDETFYSTERYDITNDKWEFVDPYPVNKYGHEGTVLNNKLFITGGITSSSTSKQVCVFDPSKEGTIEQRTRRTQVVTNCWENKSKMNYARCFHKMISYNGKLYVFGGVCVILRASFESQGCPSTEVYNPDTDQWTILASMPIGRSGHGVTVLDKQIMVLGGLCYNGHYSDSILTFDPDENKWKEDEYPRMPCKLDGLQVCNLHFPDYVLDEVRRCN.

The region spanning leucine 31 to methionine 98 is the BTB domain. The BACK domain occupies cysteine 133 to lysine 237. 5 Kelch repeats span residues phenylalanine 328–lysine 379, isoleucine 381–asparagine 426, leucine 428–lysine 473, lysine 489–lysine 542, and isoleucine 544–leucine 590.

As to quaternary structure, homodimer. Dimerization does not affect PPP2R5B-binding, but is required for its proteasomal degradation. Interacts with CUL3. Directly interacts with PPP2R5B; this interaction leads to PPP2R5B proteasomal degradation. Interacts with RBBP8/CtIP; this interaction leads to RBBP8 proteasomal degradation. Interacts with PACMP micropeptide; interaction prevents ubiquitination and degradation of RBBP8/CtIP.

The protein localises to the nucleus. The protein operates within protein modification; protein ubiquitination. Substrate-specific adapter for CUL3 E3 ubiquitin-protein ligase complex. Acts as an adapter for CUL3 to target the serine/threonine-protein phosphatase 2A (PP2A) subunit PPP2R5B for ubiquitination and subsequent proteasomal degradation, thus promoting exchange with other regulatory subunits and regulating PP2A holoenzyme composition. Acts as an adapter for CUL3 to target the DNA-end resection factor RBBP8/CtIP for ubiquitination and subsequent proteasomal degradation. Through the regulation of RBBP8/CtIP protein turnover, plays a key role in DNA damage response, favoring DNA double-strand repair through error-prone non-homologous end joining (NHEJ) over error-free, RBBP8-mediated homologous recombination (HR). This Mus musculus (Mouse) protein is Kelch-like protein 15 (Klhl15).